Here is a 279-residue protein sequence, read N- to C-terminus: Large ribosomal subunit protein uL2 (279 aa).

Composition is skewed to basic residues over residues 211–221 (GRSRWRGKTPH) and 256–279 (SYGK…RKGK). Residues 211–279 (GRSRWRGKTP…KFIVRGRKGK (69 aa)) form a disordered region.

This sequence belongs to the universal ribosomal protein uL2 family. Part of the 50S ribosomal subunit. Forms a bridge to the 30S subunit in the 70S ribosome.

One of the primary rRNA binding proteins. Required for association of the 30S and 50S subunits to form the 70S ribosome, for tRNA binding and peptide bond formation. It has been suggested to have peptidyltransferase activity; this is somewhat controversial. Makes several contacts with the 16S rRNA in the 70S ribosome. The sequence is that of Large ribosomal subunit protein uL2 from Oenococcus oeni (strain ATCC BAA-331 / PSU-1).